A 101-amino-acid polypeptide reads, in one-letter code: Large ribosomal subunit protein uL24 (101 aa).

It belongs to the universal ribosomal protein uL24 family. Part of the 50S ribosomal subunit.

One of two assembly initiator proteins, it binds directly to the 5'-end of the 23S rRNA, where it nucleates assembly of the 50S subunit. In terms of biological role, one of the proteins that surrounds the polypeptide exit tunnel on the outside of the subunit. This Streptococcus pneumoniae (strain ATCC 700669 / Spain 23F-1) protein is Large ribosomal subunit protein uL24.